The primary structure comprises 143 residues: Ribosome maturation factor RimP (143 aa).

This sequence belongs to the RimP family.

The protein resides in the cytoplasm. Functionally, required for maturation of 30S ribosomal subunits. This is Ribosome maturation factor RimP from Neisseria meningitidis serogroup C / serotype 2a (strain ATCC 700532 / DSM 15464 / FAM18).